We begin with the raw amino-acid sequence, 512 residues long: ATP synthase subunit alpha (512 aa).

Residue 169-176 (GDRQTGKT) coordinates ATP.

This sequence belongs to the ATPase alpha/beta chains family. F-type ATPases have 2 components, CF(1) - the catalytic core - and CF(0) - the membrane proton channel. CF(1) has five subunits: alpha(3), beta(3), gamma(1), delta(1), epsilon(1). CF(0) has three main subunits: a(1), b(2) and c(9-12). The alpha and beta chains form an alternating ring which encloses part of the gamma chain. CF(1) is attached to CF(0) by a central stalk formed by the gamma and epsilon chains, while a peripheral stalk is formed by the delta and b chains.

It is found in the cell membrane. The enzyme catalyses ATP + H2O + 4 H(+)(in) = ADP + phosphate + 5 H(+)(out). Its function is as follows. Produces ATP from ADP in the presence of a proton gradient across the membrane. The alpha chain is a regulatory subunit. The sequence is that of ATP synthase subunit alpha from Buchnera aphidicola subsp. Acyrthosiphon pisum (strain Tuc7).